Consider the following 106-residue polypeptide: Urease subunit beta (106 aa).

The protein belongs to the urease beta subunit family. As to quaternary structure, heterotrimer of UreA (gamma), UreB (beta) and UreC (alpha) subunits. Three heterotrimers associate to form the active enzyme.

The protein resides in the cytoplasm. The enzyme catalyses urea + 2 H2O + H(+) = hydrogencarbonate + 2 NH4(+). Its pathway is nitrogen metabolism; urea degradation; CO(2) and NH(3) from urea (urease route): step 1/1. The chain is Urease subunit beta from Parasynechococcus marenigrum (strain WH8102).